The primary structure comprises 451 residues: Serine--tRNA ligase, cytoplasmic (451 aa).

Position 236 to 238 (236 to 238 (TSE)) interacts with L-serine. ATP-binding positions include 267–269 (RKE) and Val-283. L-serine is bound at residue Glu-290. Residue 354-357 (ELVS) coordinates ATP. Residue Thr-392 participates in L-serine binding.

It belongs to the class-II aminoacyl-tRNA synthetase family. Type-1 seryl-tRNA synthetase subfamily. Homodimer. The tRNA molecule binds across the dimer.

Its subcellular location is the cytoplasm. It carries out the reaction tRNA(Ser) + L-serine + ATP = L-seryl-tRNA(Ser) + AMP + diphosphate + H(+). The enzyme catalyses tRNA(Sec) + L-serine + ATP = L-seryl-tRNA(Sec) + AMP + diphosphate + H(+). Its pathway is aminoacyl-tRNA biosynthesis; selenocysteinyl-tRNA(Sec) biosynthesis; L-seryl-tRNA(Sec) from L-serine and tRNA(Sec): step 1/1. Catalyzes the attachment of serine to tRNA(Ser). Is also able to aminoacylate tRNA(Sec) with serine, to form the misacylated tRNA L-seryl-tRNA(Sec), which will be further converted into selenocysteinyl-tRNA(Sec). The chain is Serine--tRNA ligase, cytoplasmic (serS) from Dictyostelium discoideum (Social amoeba).